A 123-amino-acid polypeptide reads, in one-letter code: Ribosome-binding factor A (123 aa).

Belongs to the RbfA family. Monomer. Binds 30S ribosomal subunits, but not 50S ribosomal subunits or 70S ribosomes.

It is found in the cytoplasm. In terms of biological role, one of several proteins that assist in the late maturation steps of the functional core of the 30S ribosomal subunit. Associates with free 30S ribosomal subunits (but not with 30S subunits that are part of 70S ribosomes or polysomes). Required for efficient processing of 16S rRNA. May interact with the 5'-terminal helix region of 16S rRNA. The chain is Ribosome-binding factor A from Prochlorococcus marinus (strain NATL1A).